The chain runs to 358 residues: Carbamoyl phosphate synthase small chain (358 aa).

Residues 1-168 (MKRLLLLEDG…TKLAYASPGV (168 aa)) are CPSase. The L-glutamine site is built by Ser45, Gly219, and Gly221. The 187-residue stretch at 171–357 (NIVLVDFGLK…INMIDDFQQK (187 aa)) folds into the Glutamine amidotransferase type-1 domain. The active-site Nucleophile is the Cys246. Residues Met247, Gln250, Asn288, Gly290, and Tyr291 each coordinate L-glutamine. Active-site residues include His330 and Asp332.

This sequence belongs to the CarA family. In terms of assembly, composed of two chains; the small (or glutamine) chain promotes the hydrolysis of glutamine to ammonia, which is used by the large (or ammonia) chain to synthesize carbamoyl phosphate. Tetramer of heterodimers (alpha,beta)4.

It catalyses the reaction hydrogencarbonate + L-glutamine + 2 ATP + H2O = carbamoyl phosphate + L-glutamate + 2 ADP + phosphate + 2 H(+). It carries out the reaction L-glutamine + H2O = L-glutamate + NH4(+). The protein operates within amino-acid biosynthesis; L-arginine biosynthesis; carbamoyl phosphate from bicarbonate: step 1/1. It participates in pyrimidine metabolism; UMP biosynthesis via de novo pathway; (S)-dihydroorotate from bicarbonate: step 1/3. In terms of biological role, small subunit of the glutamine-dependent carbamoyl phosphate synthetase (CPSase). CPSase catalyzes the formation of carbamoyl phosphate from the ammonia moiety of glutamine, carbonate, and phosphate donated by ATP, constituting the first step of 2 biosynthetic pathways, one leading to arginine and/or urea and the other to pyrimidine nucleotides. The small subunit (glutamine amidotransferase) binds and cleaves glutamine to supply the large subunit with the substrate ammonia. The protein is Carbamoyl phosphate synthase small chain of Streptococcus agalactiae serotype III (strain NEM316).